We begin with the raw amino-acid sequence, 92 residues long: Small ribosomal subunit protein uS19 (92 aa).

The protein belongs to the universal ribosomal protein uS19 family.

Functionally, protein S19 forms a complex with S13 that binds strongly to the 16S ribosomal RNA. The protein is Small ribosomal subunit protein uS19 of Gloeobacter violaceus (strain ATCC 29082 / PCC 7421).